Here is a 384-residue protein sequence, read N- to C-terminus: Large ribosomal subunit protein uL3m (384 aa).

2 disordered regions span residues Asn-80–Glu-101 and Gln-237–Arg-262. Residues Ser-240–Thr-249 show a composition bias toward polar residues.

The protein belongs to the universal ribosomal protein uL3 family. As to quaternary structure, component of the mitochondrial large ribosomal subunit (mt-LSU). Mature N.crassa 74S mitochondrial ribosomes consist of a small (37S) and a large (54S) subunit. The 37S small subunit contains a 16S ribosomal RNA (16S mt-rRNA) and 32 different proteins. The 54S large subunit contains a 23S rRNA (23S mt-rRNA) and 42 different proteins.

The protein localises to the mitochondrion. Its function is as follows. Component of the mitochondrial ribosome (mitoribosome), a dedicated translation machinery responsible for the synthesis of mitochondrial genome-encoded proteins, including at least some of the essential transmembrane subunits of the mitochondrial respiratory chain. The mitoribosomes are attached to the mitochondrial inner membrane and translation products are cotranslationally integrated into the membrane. The chain is Large ribosomal subunit protein uL3m (mrpl9) from Neurospora crassa (strain ATCC 24698 / 74-OR23-1A / CBS 708.71 / DSM 1257 / FGSC 987).